The following is a 486-amino-acid chain: Cardiolipin synthase A (486 aa).

The next 2 helical transmembrane spans lie at 3-23 (TFYT…IAGV) and 38-58 (MAWL…YLSF). PLD phosphodiesterase domains follow at residues 219–246 (MDLR…VDPR) and 399–426 (EGGL…DMRS). Residues His-224, Lys-226, Asp-231, His-404, Lys-406, and Asp-411 contribute to the active site.

The protein belongs to the phospholipase D family. Cardiolipin synthase subfamily. ClsA sub-subfamily.

Its subcellular location is the cell inner membrane. The catalysed reaction is 2 a 1,2-diacyl-sn-glycero-3-phospho-(1'-sn-glycerol) = a cardiolipin + glycerol. Its function is as follows. Catalyzes the reversible phosphatidyl group transfer from one phosphatidylglycerol molecule to another to form cardiolipin (CL) (diphosphatidylglycerol) and glycerol. The sequence is that of Cardiolipin synthase A from Citrobacter koseri (strain ATCC BAA-895 / CDC 4225-83 / SGSC4696).